The sequence spans 627 residues: tRNA uridine 5-carboxymethylaminomethyl modification enzyme MnmG (627 aa).

FAD contacts are provided by residues 13–18 (GGGHAG), Val125, and Ser180. 274–288 (GPRYCPSIEDKVVRF) is a binding site for NAD(+). Residue Gln371 participates in FAD binding.

It belongs to the MnmG family. In terms of assembly, homodimer. Heterotetramer of two MnmE and two MnmG subunits. Requires FAD as cofactor.

It is found in the cytoplasm. In terms of biological role, NAD-binding protein involved in the addition of a carboxymethylaminomethyl (cmnm) group at the wobble position (U34) of certain tRNAs, forming tRNA-cmnm(5)s(2)U34. The chain is tRNA uridine 5-carboxymethylaminomethyl modification enzyme MnmG from Francisella tularensis subsp. holarctica (strain FTNF002-00 / FTA).